Consider the following 461-residue polypeptide: CUGBP Elav-like family member 3 (461 aa).

RRM domains follow at residues 7 to 88 and 95 to 175; these read IKLF…PADS and RKLF…FADT. The span at 345-358 shows a compositional bias: pro residues; sequence PPALVAQQPPPPPQ. Residues 345-375 form a disordered region; it reads PPALVAQQPPPPPQQQQQQQQQQQQREGPDG. The segment covering 359-369 has biased composition (low complexity); that stretch reads QQQQQQQQQQQ. Positions 376 to 454 constitute an RRM 3 domain; it reads CNIFIYHLPQ…KRLKVQLKRP (79 aa).

The protein belongs to the CELF/BRUNOL family.

It localises to the nucleus. The protein localises to the cytoplasm. RNA-binding protein involved in the regulation of pre-mRNA alternative splicing. Mediates exon inclusion and/or exclusion in pre-mRNA that are subject to tissue-specific and developmentally regulated alternative splicing. Specifically activates exon 5 inclusion of cardiac isoforms of TNNT2 during heart remodeling at the juvenile to adult transition. Activates the splicing of MAPT/Tau exon 10. Binds to muscle-specific splicing enhancer (MSE) intronic sites flanking the alternative exon 5 of TNNT2 pre-mRNA. This is CUGBP Elav-like family member 3 (CELF3) from Bos taurus (Bovine).